Here is a 232-residue protein sequence, read N- to C-terminus: MGSVLSSDSGKSAPPSATPRALERRGDPELPVTSFDCAVCLEVLHQPVRTRCGHVFCRSCIATSLKNNKWTCPYCRAYLPSEGVPATDVAKRMKSEYKNCAECDTLVCLGEMRAHIRTCQKYIDKYGPLQELGETAARCVCPFCQRELDEDSLLDHCITHHRSERRPVFCPLCRLIPDENPSSFSGSLIRHLQVSHTLFYDDFIDFNIIEEALIRRVLDRSLLEYVNQSNAT.

Residues 1–10 (MGSVLSSDSG) are compositionally biased toward polar residues. Residues 1–27 (MGSVLSSDSGKSAPPSATPRALERRGD) form a disordered region. Gly2 carries N-myristoyl glycine lipidation. Residues Cys37 and Cys40 each contribute to the Zn(2+) site. The RING-type zinc-finger motif lies at 37–76 (CAVCLEVLHQPVRTRCGHVFCRSCIATSLKNNKWTCPYCR). Residues 43 to 45 (VLH) form an interaction with the C2HC RNF-type zinc finger region. 8 residues coordinate Zn(2+): Cys52, His54, Cys57, Cys60, Cys72, Cys75, Cys100, and Cys103. The segment at 100–119 (CAECDTLVCLGEMRAHIRTC) adopts a C2HC RNF-type zinc-finger fold. An interaction with the RING-type zinc finger region spans residues 109-113 (LGEMR). Zn(2+)-binding residues include His115 and Cys119. The interval 120–128 (QKYIDKYGP) is linker region. The tract at residues 210–224 (EEALIRRVLDRSLLE) is required for interaction with ubiquitin and for autoubiquitination.

Interacts with UBE2D1. Interacts with VCP/p97; leading to recruit RNF125 to RIGI and promote ubiquitination of RIGI. In terms of processing, autoubiquitinated, leading to its subsequent proteasomal degradation.

The protein localises to the golgi apparatus membrane. The catalysed reaction is S-ubiquitinyl-[E2 ubiquitin-conjugating enzyme]-L-cysteine + [acceptor protein]-L-lysine = [E2 ubiquitin-conjugating enzyme]-L-cysteine + N(6)-ubiquitinyl-[acceptor protein]-L-lysine.. It functions in the pathway protein modification; protein ubiquitination. In terms of biological role, E3 ubiquitin-protein ligase that mediates ubiquitination and subsequent proteasomal degradation of target proteins, such as RIGI, MAVS/IPS1, IFIH1/MDA5, JAK1 and p53/TP53. Acts as a negative regulator of type I interferon production by mediating ubiquitination of RIGI at 'Lys-181', leading to RIGI degradation. Mediates ubiquitination and subsequent degradation of p53/TP53. Mediates ubiquitination and subsequent degradation of JAK1. Acts as a positive regulator of T-cell activation. The chain is E3 ubiquitin-protein ligase RNF125 (RNF125) from Macaca fascicularis (Crab-eating macaque).